The chain runs to 227 residues: Cytochrome c oxidase subunit 2 (227 aa).

The Mitochondrial intermembrane segment spans residues M1–S14. The helical transmembrane segment at P15–M45 threads the bilayer. Residues L46–Q59 lie on the Mitochondrial matrix side of the membrane. A helical transmembrane segment spans residues E60–M87. At D88–I227 the chain is on the mitochondrial intermembrane side. 6 residues coordinate Cu cation: H161, C196, E198, C200, H204, and M207. Position 198 (E198) interacts with Mg(2+).

This sequence belongs to the cytochrome c oxidase subunit 2 family. As to quaternary structure, component of the cytochrome c oxidase (complex IV, CIV), a multisubunit enzyme composed of 14 subunits. The complex is composed of a catalytic core of 3 subunits MT-CO1, MT-CO2 and MT-CO3, encoded in the mitochondrial DNA, and 11 supernumerary subunits COX4I, COX5A, COX5B, COX6A, COX6B, COX6C, COX7A, COX7B, COX7C, COX8 and NDUFA4, which are encoded in the nuclear genome. The complex exists as a monomer or a dimer and forms supercomplexes (SCs) in the inner mitochondrial membrane with NADH-ubiquinone oxidoreductase (complex I, CI) and ubiquinol-cytochrome c oxidoreductase (cytochrome b-c1 complex, complex III, CIII), resulting in different assemblies (supercomplex SCI(1)III(2)IV(1) and megacomplex MCI(2)III(2)IV(2)). Found in a complex with TMEM177, COA6, COX18, COX20, SCO1 and SCO2. Interacts with TMEM177 in a COX20-dependent manner. Interacts with COX20. Interacts with COX16. Cu cation serves as cofactor.

The protein localises to the mitochondrion inner membrane. It carries out the reaction 4 Fe(II)-[cytochrome c] + O2 + 8 H(+)(in) = 4 Fe(III)-[cytochrome c] + 2 H2O + 4 H(+)(out). In terms of biological role, component of the cytochrome c oxidase, the last enzyme in the mitochondrial electron transport chain which drives oxidative phosphorylation. The respiratory chain contains 3 multisubunit complexes succinate dehydrogenase (complex II, CII), ubiquinol-cytochrome c oxidoreductase (cytochrome b-c1 complex, complex III, CIII) and cytochrome c oxidase (complex IV, CIV), that cooperate to transfer electrons derived from NADH and succinate to molecular oxygen, creating an electrochemical gradient over the inner membrane that drives transmembrane transport and the ATP synthase. Cytochrome c oxidase is the component of the respiratory chain that catalyzes the reduction of oxygen to water. Electrons originating from reduced cytochrome c in the intermembrane space (IMS) are transferred via the dinuclear copper A center (CU(A)) of subunit 2 and heme A of subunit 1 to the active site in subunit 1, a binuclear center (BNC) formed by heme A3 and copper B (CU(B)). The BNC reduces molecular oxygen to 2 water molecules using 4 electrons from cytochrome c in the IMS and 4 protons from the mitochondrial matrix. The polypeptide is Cytochrome c oxidase subunit 2 (MT-CO2) (Praomys jacksoni (African forest rat)).